A 388-amino-acid chain; its full sequence is Putative F-box protein At3g17490 (388 aa).

Positions 1–46 (MMMPHLSEDLVEEILSRVPAISLKRLRYTCKQWNALFNDQRFSKKH) constitute an F-box domain.

In Arabidopsis thaliana (Mouse-ear cress), this protein is Putative F-box protein At3g17490.